The sequence spans 394 residues: MTGLLSILLHYKGNGDLATTDIPSHEKIPSAKRTAVQFCIGPTHEQSPRMSTVSQGRVTFAVLPTKPKDEVTSMKANGSRQSSCIVSNARKRQSVHCLSRSPIPSTRLKENDSRLCSPLASPTGGLKRPAKVSFALANTPSRKGNLVPQSPRRTIATTCKGVLEDVLKKDNELKFNDSDEEDEVDDEEIESFNSFSRKMQTISNSRYRGSPKPNIEKQSCSSESDRVSQISDDEEDEEGSADEEDEEDSDVELSESSLSDDEDSPLRCPSTPVQTAAAPNESQIPDDTDFVPGTFDEDQPACLAFACSLTHANSKRSIMLPQDIDPTFPDSEPEDDGHASSTVGSLSKEEARFKAKAKWNYKSSFSAHVSSEVLRNSKSPPLDIARKAVGAHRV.

Phosphoserine occurs at positions 117 and 121. 3 disordered regions span residues 177-295, 315-347, and 370-394; these read DSDE…PGTF, KRSIMLPQDIDPTFPDSEPEDDGHASSTVGSLS, and SSEVLRNSKSPPLDIARKAVGAHRV. A compositionally biased stretch (acidic residues) spans 178 to 190; the sequence is SDEEDEVDDEEIE. Composition is skewed to polar residues over residues 191–207 and 216–230; these read SFNSFSRKMQTISNSRY and EKQSCSSESDRVSQI. Acidic residues-rich tracts occupy residues 231 to 263 and 284 to 295; these read SDDEEDEEGSADEEDEEDSDVELSESSLSDDED and IPDDTDFVPGTF. Residues 370–379 are compositionally biased toward polar residues; that stretch reads SSEVLRNSKS. Residue serine 379 is modified to Phosphoserine.

It localises to the nucleus. This is an uncharacterized protein from Schizosaccharomyces pombe (strain 972 / ATCC 24843) (Fission yeast).